The chain runs to 267 residues: Coiled-coil domain-containing protein 172 (267 aa).

2 coiled-coil regions span residues 24–97 (MREV…CEAI) and 128–191 (LMKE…EETE).

Belongs to the CCDC172 family. May interact with TEKT2.

Its subcellular location is the cytoplasm. The protein localises to the cell projection. It localises to the cilium. In Mus musculus (Mouse), this protein is Coiled-coil domain-containing protein 172 (Ccdc172).